The following is a 131-amino-acid chain: Large ribosomal subunit protein bL19 (131 aa).

This sequence belongs to the bacterial ribosomal protein bL19 family.

In terms of biological role, this protein is located at the 30S-50S ribosomal subunit interface and may play a role in the structure and function of the aminoacyl-tRNA binding site. This chain is Large ribosomal subunit protein bL19, found in Rhodopseudomonas palustris (strain HaA2).